Here is a 303-residue protein sequence, read N- to C-terminus: Glycine--tRNA ligase alpha subunit (303 aa).

It belongs to the class-II aminoacyl-tRNA synthetase family. In terms of assembly, tetramer of two alpha and two beta subunits.

The protein resides in the cytoplasm. The catalysed reaction is tRNA(Gly) + glycine + ATP = glycyl-tRNA(Gly) + AMP + diphosphate. This chain is Glycine--tRNA ligase alpha subunit, found in Cronobacter sakazakii (strain ATCC BAA-894) (Enterobacter sakazakii).